Consider the following 340-residue polypeptide: Cell division protein FtsQ (340 aa).

The tract at residues 1–41 is disordered; sequence MQGLNPFHRDQGAGGRPAPVRPAPARPAPVAPRTPRKDPAP. Residues 1–55 are Cytoplasmic-facing; it reads MQGLNPFHRDQGAGGRPAPVRPAPARPAPVAPRTPRKDPAPSRLAYRLNRMMLRP. Residues 19–32 are compositionally biased toward pro residues; sequence PVRPAPARPAPVAP. The helical transmembrane segment at 56-78 threads the bilayer; it reads LVRRLVHVGLPAFLAALVAGIWL. Residues 79-340 are Periplasmic-facing; it reads SDDTRRANLT…NAAKAKKKSG (262 aa). Positions 104–172 constitute a POTRA domain; that stretch reads FMVKMMTIEG…GVLSAVVTER (69 aa). Positions 308–340 are disordered; sequence RQARGQPELGPDGTPLAPEATAGNAAKAKKKSG. The segment covering 324-333 has biased composition (low complexity); sequence APEATAGNAA.

The protein belongs to the FtsQ/DivIB family. FtsQ subfamily.

The protein resides in the cell inner membrane. Its function is as follows. Essential cell division protein. The chain is Cell division protein FtsQ from Paracoccus denitrificans (strain Pd 1222).